Here is a 139-residue protein sequence, read N- to C-terminus: Angiogenin (139 aa).

An N-terminal signal peptide occupies residues 1–21 (MAMSSLWWTAILLLALTVSMC). Histidine 34 serves as the catalytic Proton acceptor. 3 cysteine pairs are disulfide-bonded: cysteine 49/cysteine 102, cysteine 64/cysteine 111, and cysteine 82/cysteine 126. 2 residues coordinate tRNA: cysteine 102 and valine 122. Residue histidine 133 is the Proton donor of the active site.

Belongs to the pancreatic ribonuclease family. Homodimer. Interacts with RNH1; inhibiting ANG ribonuclease activity.

It is found in the secreted. It localises to the nucleus. Its subcellular location is the nucleolus. The protein resides in the cytoplasm. The protein localises to the stress granule. In terms of biological role, secreted ribonuclease that can either promote or restrict cell proliferation of target cells, depending on the context. Endocytosed in target cells via its receptor PLXNB2 and translocates to the cytoplasm or nucleus. Under stress conditions, localizes to the cytoplasm and promotes the assembly of stress granules (SGs): specifically cleaves a subset of tRNAs within anticodon loops to produce tRNA-derived stress-induced fragments (tiRNAs), resulting in translation repression and inhibition of cell proliferation. tiRNas also prevent formation of apoptosome, thereby promoting cell survival. Preferentially cleaves RNAs between a pyrimidine and an adenosine residue, suggesting that it cleaves the anticodon loop of tRNA(Ala) (32-UUAGCAU-38) after positions 33 and 36. Cleaves a subset of tRNAs, including tRNA(Ala), tRNA(Glu), tRNA(Gly), tRNA(Lys), tRNA(Val), tRNA(His), tRNA(Asp) and tRNA(Sec). Under growth conditions and in differentiated cells, translocates to the nucleus and stimulates ribosomal RNA (rRNA) transcription, including that containing the initiation site sequences of 45S rRNA, thereby promoting cell growth and proliferation. Angiogenin induces vascularization of normal and malignant tissues via its ability to promote rRNA transcription. This is Angiogenin (ANG) from Gallus gallus (Chicken).